Here is a 390-residue protein sequence, read N- to C-terminus: Lipoyl synthase, mitochondrial (390 aa).

A mitochondrion-targeting transit peptide spans methionine 1–leucine 18. 7 residues coordinate [4Fe-4S] cluster: cysteine 99, cysteine 104, cysteine 110, cysteine 137, cysteine 141, cysteine 144, and serine 351. In terms of domain architecture, Radical SAM core spans alanine 120–leucine 340.

This sequence belongs to the radical SAM superfamily. Lipoyl synthase family. Requires [4Fe-4S] cluster as cofactor.

It localises to the mitochondrion. It carries out the reaction [[Fe-S] cluster scaffold protein carrying a second [4Fe-4S](2+) cluster] + N(6)-octanoyl-L-lysyl-[protein] + 2 oxidized [2Fe-2S]-[ferredoxin] + 2 S-adenosyl-L-methionine + 4 H(+) = [[Fe-S] cluster scaffold protein] + N(6)-[(R)-dihydrolipoyl]-L-lysyl-[protein] + 4 Fe(3+) + 2 hydrogen sulfide + 2 5'-deoxyadenosine + 2 L-methionine + 2 reduced [2Fe-2S]-[ferredoxin]. The protein operates within protein modification; protein lipoylation via endogenous pathway; protein N(6)-(lipoyl)lysine from octanoyl-[acyl-carrier-protein]: step 2/2. Functionally, catalyzes the radical-mediated insertion of two sulfur atoms into the C-6 and C-8 positions of the octanoyl moiety bound to the lipoyl domains of lipoate-dependent enzymes, thereby converting the octanoylated domains into lipoylated derivatives. This Coprinopsis cinerea (strain Okayama-7 / 130 / ATCC MYA-4618 / FGSC 9003) (Inky cap fungus) protein is Lipoyl synthase, mitochondrial.